The chain runs to 682 residues: DNA ligase (682 aa).

Residues Asp38–Asp42, Ser87–Ile88, and Glu119 contribute to the NAD(+) site. The active-site N6-AMP-lysine intermediate is Lys121. Residues Arg142, Glu181, Lys298, and Lys322 each contribute to the NAD(+) site. Cys416, Cys419, Cys434, and Cys439 together coordinate Zn(2+). In terms of domain architecture, BRCT spans Gly601 to Arg682.

The protein belongs to the NAD-dependent DNA ligase family. LigA subfamily. Requires Mg(2+) as cofactor. Mn(2+) serves as cofactor.

It carries out the reaction NAD(+) + (deoxyribonucleotide)n-3'-hydroxyl + 5'-phospho-(deoxyribonucleotide)m = (deoxyribonucleotide)n+m + AMP + beta-nicotinamide D-nucleotide.. In terms of biological role, DNA ligase that catalyzes the formation of phosphodiester linkages between 5'-phosphoryl and 3'-hydroxyl groups in double-stranded DNA using NAD as a coenzyme and as the energy source for the reaction. It is essential for DNA replication and repair of damaged DNA. The chain is DNA ligase from Desulfosudis oleivorans (strain DSM 6200 / JCM 39069 / Hxd3) (Desulfococcus oleovorans).